The sequence spans 80 residues: Pigment-dispersing hormone type 2 (80 aa).

A signal peptide spans 1–23 (MARCFVVLAFLALAAMSLQVATA). The residue at position 77 (Ala77) is an Alanine amide.

Belongs to the arthropod PDH family. As to expression, eyestalk.

Its subcellular location is the secreted. In terms of biological role, the pigment-dispersing hormone causes the migration of the distal retinal pigment into the proximal end of the pigment chromatophore cells and thus decreases the amount of light entering the retinulas. May also function as a neurotransmitter and/or neuromodulator. This Penaeus vannamei (Whiteleg shrimp) protein is Pigment-dispersing hormone type 2 (PDH2).